The chain runs to 689 residues: Methionine--tRNA ligase (689 aa).

The 'HIGH' region signature appears at 15-25 (PYANGPVHIGH). Residues Cys147, Cys150, Cys160, and Cys163 each contribute to the Zn(2+) site. Residues 342–346 (KISTS) carry the 'KMSKS' region motif. Position 345 (Thr345) interacts with ATP. Residues 588-689 (DFAKMDIRVA…AVVNAGSMIG (102 aa)) enclose the tRNA-binding domain.

It belongs to the class-I aminoacyl-tRNA synthetase family. MetG type 1 subfamily. As to quaternary structure, homodimer. It depends on Zn(2+) as a cofactor.

The protein resides in the cytoplasm. The enzyme catalyses tRNA(Met) + L-methionine + ATP = L-methionyl-tRNA(Met) + AMP + diphosphate. Functionally, is required not only for elongation of protein synthesis but also for the initiation of all mRNA translation through initiator tRNA(fMet) aminoacylation. This chain is Methionine--tRNA ligase, found in Cytophaga hutchinsonii (strain ATCC 33406 / DSM 1761 / CIP 103989 / NBRC 15051 / NCIMB 9469 / D465).